Consider the following 99-residue polypeptide: uncharacterized protein (99 aa).

Residues 3–68 (ERLKAITNLL…EKFDSNRKFY (66 aa)) are a coiled coil.

This is an uncharacterized protein from Aquifex aeolicus (strain VF5).